The sequence spans 530 residues: C2H2-type transcription factor MSN2 (530 aa).

2 C2H2-type zinc fingers span residues 409–437 (FVCD…QEKP) and 438–465 (FECN…SGGA).

The protein localises to the nucleus. Its subcellular location is the cytoplasm. Transcription factor that acts as a key downstream transcription factor in the HOG1-MAPK pathway. Plays crucial roles in the regulation of dimorphism transition, aggravated pigmentation, conidiation, microsclerotia formation and subsequent virulence towards Spodoptera litura larvae. More specifically regulates the expression of genes involved in antioxidation, pigment biosynthesis and ion transport and storage. The sequence is that of C2H2-type transcription factor MSN2 from Metarhizium rileyi (strain RCEF 4871) (Nomuraea rileyi).